Here is a 425-residue protein sequence, read N- to C-terminus: Glutamyl-tRNA reductase (425 aa).

Substrate is bound by residues 49–52, S109, 114–116, and Q120; these read TCNR and EGQ. C50 functions as the Nucleophile in the catalytic mechanism. 189 to 194 is an NADP(+) binding site; it reads GAGETG.

It belongs to the glutamyl-tRNA reductase family. Homodimer.

The enzyme catalyses (S)-4-amino-5-oxopentanoate + tRNA(Glu) + NADP(+) = L-glutamyl-tRNA(Glu) + NADPH + H(+). The protein operates within porphyrin-containing compound metabolism; protoporphyrin-IX biosynthesis; 5-aminolevulinate from L-glutamyl-tRNA(Glu): step 1/2. Its pathway is porphyrin-containing compound metabolism; chlorophyll biosynthesis. Catalyzes the NADPH-dependent reduction of glutamyl-tRNA(Glu) to glutamate 1-semialdehyde (GSA). This Chlorobium luteolum (strain DSM 273 / BCRC 81028 / 2530) (Pelodictyon luteolum) protein is Glutamyl-tRNA reductase.